Reading from the N-terminus, the 89-residue chain is Small ribosomal subunit protein uS15 (89 aa).

Belongs to the universal ribosomal protein uS15 family. As to quaternary structure, part of the 30S ribosomal subunit. Forms a bridge to the 50S subunit in the 70S ribosome, contacting the 23S rRNA.

Its function is as follows. One of the primary rRNA binding proteins, it binds directly to 16S rRNA where it helps nucleate assembly of the platform of the 30S subunit by binding and bridging several RNA helices of the 16S rRNA. Forms an intersubunit bridge (bridge B4) with the 23S rRNA of the 50S subunit in the ribosome. The protein is Small ribosomal subunit protein uS15 of Mycobacterium marinum (strain ATCC BAA-535 / M).